A 70-amino-acid polypeptide reads, in one-letter code: Large ribosomal subunit protein uL29 (70 aa).

It belongs to the universal ribosomal protein uL29 family.

The polypeptide is Large ribosomal subunit protein uL29 (Prochlorococcus marinus (strain MIT 9313)).